The following is a 1717-amino-acid chain: Protein MON2 homolog (1717 aa).

Ser-2 carries the N-acetylserine modification. A phosphoserine mark is found at Ser-205 and Ser-537. The disordered stretch occupies residues 511–538 (ETECQTTTEEGSSPTQSTEQQDLQSTSD). Residues 522–538 (SSPTQSTEQQDLQSTSD) show a composition bias toward polar residues.

It belongs to the MON2 family. As to quaternary structure, homooligomer. Heterotrimer with ATP9A and DOP1B; this interaction is retromer-independent. Interacts with SNX3.

The protein localises to the early endosome membrane. In terms of biological role, plays a role in regulating membrane trafficking of cargo proteins. Together with ATP9A and DOP1B, regulates SNX3 retromer-mediated endosomal sorting of WLS away from lysosomal degradation. This chain is Protein MON2 homolog, found in Homo sapiens (Human).